The chain runs to 551 residues: Probable CoA ligase CCL5 (551 aa).

ATP-binding positions include 204–212, 345–350, Asp-431, 443–446, and Lys-537; these read SSGTTGASK, QGYGLT, and VVDR. Positions 274-345 are SBD1; sequence EIHEMLSAIE…ENYPTVSILQ (72 aa). The tract at residues 346-410 is SBD2; it reads GYGLTESTGI…LRGPTIMKGY (65 aa).

It belongs to the ATP-dependent AMP-binding enzyme family. In terms of tissue distribution, mostly expressed at low levels in glandular trichomes (lupulin glands) after flowering, and, to a lower extent, in stems, leaves, cones and flowers.

It is found in the cytoplasm. Its subcellular location is the cytosol. The chain is Probable CoA ligase CCL5 from Humulus lupulus (European hop).